A 214-amino-acid polypeptide reads, in one-letter code: Cytochrome b (214 aa).

4 consecutive transmembrane segments (helical) span residues 31 to 51 (FGSM…FLAI), 75 to 96 (WIMQ…YIHI), 111 to 131 (WLSG…GYVL), and 176 to 196 (FFAL…AHIL). Heme b contacts are provided by residue 81 and histidine 95. Heme b is bound by residues histidine 180 and histidine 194. Histidine 199 contributes to the a ubiquinone binding site.

It belongs to the cytochrome b family. In terms of assembly, the cytochrome bc1 complex contains 3 respiratory subunits (MT-CYB, CYC1 and UQCRFS1), 2 core proteins (UQCRC1 and UQCRC2) and probably 6 low-molecular weight proteins. It depends on heme b as a cofactor.

The protein resides in the mitochondrion inner membrane. In terms of biological role, component of the ubiquinol-cytochrome c reductase complex (complex III or cytochrome b-c1 complex) that is part of the mitochondrial respiratory chain. The b-c1 complex mediates electron transfer from ubiquinol to cytochrome c. Contributes to the generation of a proton gradient across the mitochondrial membrane that is then used for ATP synthesis. In Bothriechis schlegelii (Eyelash palm pitviper), this protein is Cytochrome b (MT-CYB).